The sequence spans 626 residues: Basic helix-loop-helix ARNT-like protein 1 (626 aa).

The segment at Met-1–Arg-60 is disordered. Phosphoserine; by GSK3-beta is present on Ser-17. Thr-21 carries the post-translational modification Phosphothreonine; by GSK3-beta. Positions Asn-36–Gly-41 match the Nuclear localization signal motif. A compositionally biased stretch (basic and acidic residues) spans Asp-51 to Arg-60. Residues Asn-72–Leu-125 form the bHLH domain. A Phosphoserine modification is found at Ser-78. Ser-90 carries the phosphoserine; by CK2 modification. A Nuclear export signal 1 motif is present at residues Leu-142–Leu-152. One can recognise a PAS 1 domain in the interval Ser-143–Pro-215. Lys-252 participates in a covalent cross-link: Glycyl lysine isopeptide (Lys-Gly) (interchain with G-Cter in SUMO2 and SUMO3). Residue Lys-259 forms a Glycyl lysine isopeptide (Lys-Gly) (interchain with G-Cter in SUMO); alternate linkage. Lys-259 participates in a covalent cross-link: Glycyl lysine isopeptide (Lys-Gly) (interchain with G-Cter in SUMO2); alternate. Positions Pro-326 to Arg-396 constitute a PAS 2 domain. Positions Leu-361–Leu-369 match the Nuclear export signal 2 motif. A PAC domain is found at Thr-401 to Asn-444. Disordered stretches follow at residues Thr-457–Gly-493 and Arg-510–Glu-597. A compositionally biased stretch (gly residues) spans Ile-484–Gly-493. Residues Arg-508 to Gln-588 are interaction with CIART. Low complexity predominate over residues Gly-511–Pro-521. An N6-acetyllysine modification is found at Lys-538.

In terms of assembly, component of the circadian clock oscillator which includes the CRY1/2 proteins, CLOCK or NPAS2, BMAL1 or BMAL2, CSNK1D and/or CSNK1E, TIMELESS and the PER1/2/3 proteins. Forms a heterodimer with CLOCK. The CLOCK-BMAL1 heterodimer is required for E-box-dependent transactivation, for CLOCK nuclear translocation and degradation, and, for phosphorylation of both CLOCK and BMAL1. Part of a nuclear complex which also includes RACK1 and PRKCA; RACK1 and PRKCA are recruited to the complex in a circadian manner. Interacts with NPAS2. Interacts with EZH2. Interacts with SUMO3. Interacts with SIRT1. Interacts with AHR. Interacts with ID1, ID2 and ID3. Interacts with DDX4. Interacts with OGT. Interacts with EED and SUZ12. Interacts with MTA1. Interacts with CIART. Interacts with HSP90. Interacts with KAT2B and EP300. Interacts with BHLHE40/DEC1 and BHLHE41/DEC2. Interacts with RELB and the interaction is enhanced in the presence of CLOCK. Interacts with PER1, PER2, CRY1 and CRY2 and this interaction requires a translocation to the nucleus. Interaction of the CLOCK-BMAL1 heterodimer with PER or CRY inhibits transcription activation. Interaction of the CLOCK-BMAL1 with CRY1 is independent of DNA but with PER2 is off DNA. The CLOCK-BMAL1 heterodimer interacts with GSK3B. Interacts with KDM5A. Interacts with KMT2A; in a circadian manner. Interacts with UBE3A. Interacts with PRKCG. Interacts with MAGEL2. Interacts with NCOA2. Interacts with THRAP3. The CLOCK-BMAL1 heterodimer interacts with PASD1. Interacts with PASD1. Interacts with USP9X. Interacts with PIWIL2 (via PIWI domain). Interacts with HDAC3. Interacts with HNF4A. Ubiquitinated, leading to its proteasomal degradation. Deubiquitinated by USP9X. Post-translationally, O-glycosylated; contains O-GlcNAc. O-glycosylation by OGT prevents protein degradation by inhibiting ubiquitination. It also stabilizes the CLOCK-BMAL1 heterodimer thereby increasing CLOCK-BMAL1-mediated transcription of genes in the negative loop of the circadian clock such as PER1/2/3 and CRY1/2. In terms of processing, acetylated on Lys-538 by CLOCK during the repression phase of the circadian cycle. Acetylation facilitates recruitment of CRY1 protein and initiates the repression phase of the circadian cycle. Acetylated at Lys-538 by KAT5 during the activation phase of the cycle, leading to recruitment of the positive transcription elongation factor b (P-TEFb) and BRD4, followed by productive elongation of circadian transcripts. Deacetylated by SIRT1, which may result in decreased protein stability. Phosphorylated upon dimerization with CLOCK. Phosphorylation enhances the transcriptional activity, alters the subcellular localization and decreases the stability of the CLOCK-BMAL1 heterodimer by promoting its degradation. Phosphorylation shows circadian variations in the liver with a peak between CT10 to CT14. Phosphorylation at Ser-90 by CK2 is essential for its nuclear localization, its interaction with CLOCK and controls CLOCK nuclear entry. Dephosphorylation at Ser-78 is important for dimerization with CLOCK and transcriptional activity. Post-translationally, sumoylated on Lys-259 upon dimerization with CLOCK. Predominantly conjugated to poly-SUMO2/3 rather than SUMO1 and the level of these conjugates undergo rhythmic variation, peaking at CT9-CT12. Sumoylation localizes it exclusively to the PML body and promotes its ubiquitination in the PML body, ubiquitin-dependent proteasomal degradation and the transcriptional activity of the CLOCK-BMAL1 heterodimer. In terms of processing, undergoes lysosome-mediated degradation in a time-dependent manner in the liver.

Its subcellular location is the nucleus. It is found in the cytoplasm. It localises to the PML body. In terms of biological role, transcriptional activator which forms a core component of the circadian clock. The circadian clock, an internal time-keeping system, regulates various physiological processes through the generation of approximately 24 hour circadian rhythms in gene expression, which are translated into rhythms in metabolism and behavior. It is derived from the Latin roots 'circa' (about) and 'diem' (day) and acts as an important regulator of a wide array of physiological functions including metabolism, sleep, body temperature, blood pressure, endocrine, immune, cardiovascular, and renal function. Consists of two major components: the central clock, residing in the suprachiasmatic nucleus (SCN) of the brain, and the peripheral clocks that are present in nearly every tissue and organ system. Both the central and peripheral clocks can be reset by environmental cues, also known as Zeitgebers (German for 'timegivers'). The predominant Zeitgeber for the central clock is light, which is sensed by retina and signals directly to the SCN. The central clock entrains the peripheral clocks through neuronal and hormonal signals, body temperature and feeding-related cues, aligning all clocks with the external light/dark cycle. Circadian rhythms allow an organism to achieve temporal homeostasis with its environment at the molecular level by regulating gene expression to create a peak of protein expression once every 24 hours to control when a particular physiological process is most active with respect to the solar day. Transcription and translation of core clock components (CLOCK, NPAS2, BMAL1, BMAL2, PER1, PER2, PER3, CRY1 and CRY2) plays a critical role in rhythm generation, whereas delays imposed by post-translational modifications (PTMs) are important for determining the period (tau) of the rhythms (tau refers to the period of a rhythm and is the length, in time, of one complete cycle). A diurnal rhythm is synchronized with the day/night cycle, while the ultradian and infradian rhythms have a period shorter and longer than 24 hours, respectively. Disruptions in the circadian rhythms contribute to the pathology of cardiovascular diseases, cancer, metabolic syndromes and aging. A transcription/translation feedback loop (TTFL) forms the core of the molecular circadian clock mechanism. Transcription factors, CLOCK or NPAS2 and BMAL1 or BMAL2, form the positive limb of the feedback loop, act in the form of a heterodimer and activate the transcription of core clock genes and clock-controlled genes (involved in key metabolic processes), harboring E-box elements (5'-CACGTG-3') within their promoters. The core clock genes: PER1/2/3 and CRY1/2 which are transcriptional repressors form the negative limb of the feedback loop and interact with the CLOCK|NPAS2-BMAL1|BMAL2 heterodimer inhibiting its activity and thereby negatively regulating their own expression. This heterodimer also activates nuclear receptors NR1D1, NR1D2, RORA, RORB and RORG, which form a second feedback loop and which activate and repress BMAL1 transcription, respectively. BMAL1 positively regulates myogenesis and negatively regulates adipogenesis via the transcriptional control of the genes of the canonical Wnt signaling pathway. Plays a role in normal pancreatic beta-cell function; regulates glucose-stimulated insulin secretion via the regulation of antioxidant genes NFE2L2/NRF2 and its targets SESN2, PRDX3, CCLC and CCLM. Negatively regulates the mTORC1 signaling pathway; regulates the expression of MTOR and DEPTOR. Controls diurnal oscillations of Ly6C inflammatory monocytes; rhythmic recruitment of the PRC2 complex imparts diurnal variation to chemokine expression that is necessary to sustain Ly6C monocyte rhythms. Regulates the expression of HSD3B2, STAR, PTGS2, CYP11A1, CYP19A1 and LHCGR in the ovary and also the genes involved in hair growth. Plays an important role in adult hippocampal neurogenesis by regulating the timely entry of neural stem/progenitor cells (NSPCs) into the cell cycle and the number of cell divisions that take place prior to cell-cycle exit. Regulates the circadian expression of CIART. The CLOCK-BMAL1 heterodimer regulates the circadian expression of SERPINE1/PAI1, VWF, B3, CCRN4L/NOC, NAMPT, DBP, MYOD1, PPARGC1A, PPARGC1B, SIRT1, GYS2, F7, NGFR, GNRHR, BHLHE40/DEC1, ATF4, MTA1 and also genes implicated in glucose and lipid metabolism. Promotes rhythmic chromatin opening, regulating the DNA accessibility of other transcription factors. The NPAS2-BMAL1 heterodimer positively regulates the expression of MAOA, F7 and LDHA and modulates the circadian rhythm of daytime contrast sensitivity by regulating the rhythmic expression of adenylate cyclase type 1 (ADCY1) in the retina. The preferred binding motif for the CLOCK-BMAL1 heterodimer is 5'-CACGTGA-3', which contains a flanking adenine nucleotide at the 3-prime end of the canonical 6-nucleotide E-box sequence. CLOCK specifically binds to the half-site 5'-CAC-3', while BMAL1 binds to the half-site 5'-GTGA-3'. The CLOCK-BMAL1 heterodimer also recognizes the non-canonical E-box motifs 5'-AACGTGA-3' and 5'-CATGTGA-3'. Essential for the rhythmic interaction of CLOCK with ASS1 and plays a critical role in positively regulating CLOCK-mediated acetylation of ASS1. Plays a role in protecting against lethal sepsis by limiting the expression of immune checkpoint protein CD274 in macrophages in a PKM2-dependent manner. Regulates the diurnal rhythms of skeletal muscle metabolism via transcriptional activation of genes promoting triglyceride synthesis (DGAT2) and metabolic efficiency (COQ10B). In Equus caballus (Horse), this protein is Basic helix-loop-helix ARNT-like protein 1 (BMAL1).